Consider the following 208-residue polypeptide: Small ribosomal subunit protein uS4 (208 aa).

The S4 RNA-binding domain maps to 98 to 158; the sequence is CRLDTVSYRM…EKAKNHLRIK (61 aa).

It belongs to the universal ribosomal protein uS4 family. As to quaternary structure, part of the 30S ribosomal subunit. Contacts protein S5. The interaction surface between S4 and S5 is involved in control of translational fidelity.

One of the primary rRNA binding proteins, it binds directly to 16S rRNA where it nucleates assembly of the body of the 30S subunit. Functionally, with S5 and S12 plays an important role in translational accuracy. The sequence is that of Small ribosomal subunit protein uS4 from Nitrosospira multiformis (strain ATCC 25196 / NCIMB 11849 / C 71).